The chain runs to 501 residues: Group 3 secretory phospholipase A2 (501 aa).

A signal peptide spans 1 to 19 (MGVLVVLLGVLSFLGRTLG). Positions 119-139 (RGPAESPAGTREKRAAGQNGV) are disordered. The phospholipase A2-like stretch occupies residues 150–291 (GWTVPGTLWC…SWSSPATSLT (142 aa)). 3 residues coordinate Ca(2+): Trp-158, Gly-160, and Gly-162. 4 cysteine pairs are disulfide-bonded: Cys-159/Cys-181, Cys-180/Cys-220, Cys-187/Cys-213, and Cys-211/Cys-244. An N-linked (GlcNAc...) asparagine glycan is attached at Asn-167. The active site involves His-184. Position 185 (Asp-185) interacts with Ca(2+). Asp-214 is a catalytic residue. A glycan (N-linked (GlcNAc...) asparagine) is linked at Asn-280. Positions 284–298 (SSPATSLTPSPQNPA) are enriched in polar residues. The segment at 284–339 (SSPATSLTPSPQNPALSRPQPMQHPQQWPSEWKESKSPSKTNATALQAPVASPGSD) is disordered. Residues Asn-325 and Asn-403 are each glycosylated (N-linked (GlcNAc...) asparagine).

The protein belongs to the phospholipase A2 family. Ca(2+) is required as a cofactor. N-glycosylation does not affect the catalytic activity, but is required for proper secretion. A nonglycosylated form was observed in several cell types. In terms of processing, in several cell types, the N- and C-termini are cleaved off.

It is found in the secreted. Its subcellular location is the cell membrane. The protein localises to the cytoplasm. It localises to the cytoskeleton. The protein resides in the microtubule organizing center. It is found in the centrosome. Its subcellular location is the centriole. The protein localises to the recycling endosome. The catalysed reaction is a 1,2-diacyl-sn-glycero-3-phosphocholine + H2O = a 1-acyl-sn-glycero-3-phosphocholine + a fatty acid + H(+). The enzyme catalyses 1-hexadecanoyl-2-(9Z,12Z-octadecadienoyl)-sn-glycero-3-phosphocholine + H2O = (9Z,12Z)-octadecadienoate + 1-hexadecanoyl-sn-glycero-3-phosphocholine + H(+). It carries out the reaction 1-hexadecanoyl-2-(5Z,8Z,11Z,14Z-eicosatetraenoyl)-sn-glycero-3-phosphocholine + H2O = 1-hexadecanoyl-sn-glycero-3-phosphocholine + (5Z,8Z,11Z,14Z)-eicosatetraenoate + H(+). It catalyses the reaction 1-hexadecanoyl-2-(9Z,12Z-octadecadienoyl)-sn-glycero-3-phosphoethanolamine + H2O = 1-hexadecanoyl-sn-glycero-3-phosphoethanolamine + (9Z,12Z)-octadecadienoate + H(+). The catalysed reaction is 1-hexadecanoyl-2-(5Z,8Z,11Z,14Z-eicosatetraenoyl)-sn-glycero-3-phosphoethanolamine + H2O = 1-hexadecanoyl-sn-glycero-3-phosphoethanolamine + (5Z,8Z,11Z,14Z)-eicosatetraenoate + H(+). In terms of biological role, secretory calcium-dependent phospholipase A2 that primarily targets extracellular phospholipids. Hydrolyzes the ester bond of the fatty acyl group attached at sn-2 position of phospholipids without apparent head group selectivity. Contributes to phospholipid remodeling of low-density lipoprotein (LDL) and high-density lipoprotein (HDL) particles. Hydrolyzes LDL phospholipids releasing unsaturated fatty acids that regulate macrophage differentiation toward foam cells. May act in an autocrine and paracrine manner. Secreted by immature mast cells, acts on nearby fibroblasts upstream to PTDGS to synthesize prostaglandin D2 (PGD2), which in turn promotes mast cell maturation and degranulation via PTGDR. Secreted by epididymal epithelium, acts on immature sperm cells within the duct, modulating the degree of unsaturation of the fatty acyl components of phosphatidylcholines required for acrosome assembly and sperm cell motility. Facilitates the replacement of fatty acyl chains in phosphatidylcholines in sperm membranes from omega-6 and omega-9 to omega-3 polyunsaturated fatty acids (PUFAs). Coupled to lipoxygenase pathway, may process omega-6 PUFAs to generate oxygenated lipid mediators in the male reproductive tract. At pericentrosomal preciliary compartment, negatively regulates ciliogenesis likely by regulating endocytotic recycling of ciliary membrane protein. Coupled to cyclooxygenase pathway provides arachidonate to generate prostaglandin E2 (PGE2), a potent immunomodulatory lipid in inflammation and tumorigenesis. At colonic epithelial barrier, preferentially hydrolyzes phospholipids having arachidonate and docosahexaenoate at sn-2 position, contributing to the generation of oxygenated metabolites involved in colonic stem cell homeostasis. Releases C16:0 and C18:0 lysophosphatidylcholine subclasses from neuron plasma membranes and promotes neurite outgrowth and neuron survival. The chain is Group 3 secretory phospholipase A2 (PLA2G3) from Bos taurus (Bovine).